Reading from the N-terminus, the 377-residue chain is Nitric oxide reductase FlRd-NAD(+) reductase (377 aa).

The protein belongs to the FAD-dependent oxidoreductase family. FAD is required as a cofactor.

It is found in the cytoplasm. It carries out the reaction 2 reduced [nitric oxide reductase rubredoxin domain] + NAD(+) + H(+) = 2 oxidized [nitric oxide reductase rubredoxin domain] + NADH. It participates in nitrogen metabolism; nitric oxide reduction. Functionally, one of at least two accessory proteins for anaerobic nitric oxide (NO) reductase. Reduces the rubredoxin moiety of NO reductase. The protein is Nitric oxide reductase FlRd-NAD(+) reductase of Escherichia coli (strain 55989 / EAEC).